Consider the following 364-residue polypeptide: sn-glycerol-3-phosphate import ATP-binding protein UgpC (364 aa).

Residues 4–235 (VVLRNVRKTY…PATTFVASFI (232 aa)) enclose the ABC transporter domain. 37-44 (GPSGCGKS) lines the ATP pocket.

The protein belongs to the ABC transporter superfamily. sn-glycerol-3-phosphate importer (TC 3.A.1.1.3) family. The complex is composed of two ATP-binding proteins (UgpC), two transmembrane proteins (UgpA and UgpE) and a solute-binding protein (UgpB).

It localises to the cell inner membrane. It catalyses the reaction sn-glycerol 3-phosphate(out) + ATP + H2O = sn-glycerol 3-phosphate(in) + ADP + phosphate + H(+). Functionally, part of the ABC transporter complex UgpBAEC involved in sn-glycerol-3-phosphate (G3P) import. Responsible for energy coupling to the transport system. This Rhodopseudomonas palustris (strain BisB5) protein is sn-glycerol-3-phosphate import ATP-binding protein UgpC.